Consider the following 230-residue polypeptide: Orotidine 5'-phosphate decarboxylase (230 aa).

Substrate is bound by residues Asp11, Lys34, 61 to 70, Thr117, Arg179, Gln188, Gly208, and Arg209; that span reads DLKLHDIPNT. Lys63 serves as the catalytic Proton donor.

Belongs to the OMP decarboxylase family. Type 1 subfamily. In terms of assembly, homodimer.

The enzyme catalyses orotidine 5'-phosphate + H(+) = UMP + CO2. It participates in pyrimidine metabolism; UMP biosynthesis via de novo pathway; UMP from orotate: step 2/2. Its function is as follows. Catalyzes the decarboxylation of orotidine 5'-monophosphate (OMP) to uridine 5'-monophosphate (UMP). The chain is Orotidine 5'-phosphate decarboxylase from Streptococcus pyogenes serotype M1.